We begin with the raw amino-acid sequence, 496 residues long: MGLPGKNKGAVLSKIATNNQHGENSEYFDGWKAYDKDPFHLSRNPHGIIQMGLAENQLCLDLIKDWVKENPEASICTLEGIHQFSDIANFQDYHGLKKFRQAIAHFMGKARGGRVTFDPERVVMSGGATGANETIMFCLADPGDVFLIPSPYYAAFDRDLRWRTGVEIIPVPCSSSDNFKLTVDAAEWAYKKAQESNKKVKGLILTNPSNPLGTMLDKDTLTNLVRFVTRKNIHLVVDEIYAATVFAGGDFVSVAEVVNDVDISEVNVDLIHIVYSLSKDMGLPGFRVGIVYSFNDSVVSCARKMSSFGLVSSQTQLMLASMLSDDQFVDNFLMESSRRLGIRHKVFTTGIKKADIACLTSNAGLFAWMDLRHLLRDRNSFESEIELWHIIIDRVKLNVSPGSSFRCTEPGWFRICFANMDDDTLHVALGRIQDFVSKNKNKIVEKASENDQVIQNKSAKKLKWTQTNLRLSFRRLYEDGLSSPGIMSPHSPLLRA.

Substrate is bound by residues glutamate 55 and tyrosine 93. Residue lysine 279 is modified to N6-(pyridoxal phosphate)lysine. Phosphoserine occurs at positions 483, 488, and 491.

Belongs to the class-I pyridoxal-phosphate-dependent aminotransferase family. Homodimer and heterodimer. In vivo, the relevance of heterodimerization with other ACS enzymes is however unsure. Interacts with GRF3. Pyridoxal 5'-phosphate is required as a cofactor. Phosphorylated on serine residue by MAP kinase (MPK6). Post-translationally, may be processed at its C-terminus. As to expression, high in developing leaves and in flowers. Expressed in roots and siliques.

It catalyses the reaction S-adenosyl-L-methionine = 1-aminocyclopropane-1-carboxylate + S-methyl-5'-thioadenosine + H(+). It functions in the pathway alkene biosynthesis; ethylene biosynthesis via S-adenosyl-L-methionine; ethylene from S-adenosyl-L-methionine: step 1/2. Functionally, 1-aminocyclopropane-1-carboxylate synthase (ACS) enzymes catalyze the conversion of S-adenosyl-L-methionine (SAM) into 1-aminocyclopropane-1-carboxylate (ACC), a direct precursor of ethylene. The sequence is that of 1-aminocyclopropane-1-carboxylate synthase 2 (ACS2) from Arabidopsis thaliana (Mouse-ear cress).